The following is a 303-amino-acid chain: Elongation factor Ts (303 aa).

An involved in Mg(2+) ion dislocation from EF-Tu region spans residues 81–84; sequence TDFV.

This sequence belongs to the EF-Ts family.

The protein localises to the cytoplasm. Its function is as follows. Associates with the EF-Tu.GDP complex and induces the exchange of GDP to GTP. It remains bound to the aminoacyl-tRNA.EF-Tu.GTP complex up to the GTP hydrolysis stage on the ribosome. The sequence is that of Elongation factor Ts from Mesomycoplasma hyopneumoniae (strain 232) (Mycoplasma hyopneumoniae).